We begin with the raw amino-acid sequence, 324 residues long: Mitochondrial thiamine pyrophosphate carrier 1 (324 aa).

Solcar repeat units lie at residues 12 to 110, 119 to 205, and 212 to 307; these read GNRI…ISSA, PQPV…LRSP, and PFGT…VLGL. The next 6 helical transmembrane spans lie at 15–35, 79–99, 125–145, 182–202, 218–238, and 282–299; these read IQVVAAGATAGLVSRFCVAPL, ITGLWKGNIPAELLYICYGGI, FISGAVAGGIATTSTYPLDLL, TAAIAQIVPYMGLFFAGYEAL, AGAGVVASVIAKTGVFPLDLV, and GLTVSLIKAAPASAVTMW.

Belongs to the mitochondrial carrier (TC 2.A.29) family.

The protein localises to the mitochondrion inner membrane. Mitochondrial transporter that mediates uptake of thiamine pyrophosphate (ThPP) into mitochondria. This is Mitochondrial thiamine pyrophosphate carrier 1 (TPC1) from Ajellomyces capsulatus (strain NAm1 / WU24) (Darling's disease fungus).